Reading from the N-terminus, the 479-residue chain is Ribulose bisphosphate carboxylase large chain (479 aa).

Residues 1–2 (MS) constitute a propeptide that is removed on maturation. The residue at position 3 (P3) is an N-acetylproline. 2 residues coordinate substrate: N123 and T173. K175 (proton acceptor) is an active-site residue. K177 provides a ligand contact to substrate. Mg(2+) is bound by residues K201, D203, and E204. Position 201 is an N6-carboxylysine (K201). Catalysis depends on H294, which acts as the Proton acceptor. Positions 295, 327, and 379 each coordinate substrate.

The protein belongs to the RuBisCO large chain family. Type I subfamily. Heterohexadecamer of 8 large chains and 8 small chains; disulfide-linked. The disulfide link is formed within the large subunit homodimers. The cofactor is Mg(2+). The disulfide bond which can form in the large chain dimeric partners within the hexadecamer appears to be associated with oxidative stress and protein turnover.

Its subcellular location is the plastid. It is found in the chloroplast. It carries out the reaction 2 (2R)-3-phosphoglycerate + 2 H(+) = D-ribulose 1,5-bisphosphate + CO2 + H2O. The enzyme catalyses D-ribulose 1,5-bisphosphate + O2 = 2-phosphoglycolate + (2R)-3-phosphoglycerate + 2 H(+). RuBisCO catalyzes two reactions: the carboxylation of D-ribulose 1,5-bisphosphate, the primary event in carbon dioxide fixation, as well as the oxidative fragmentation of the pentose substrate in the photorespiration process. Both reactions occur simultaneously and in competition at the same active site. This is Ribulose bisphosphate carboxylase large chain from Hordeum vulgare (Barley).